Here is a 127-residue protein sequence, read N- to C-terminus: Large ribosomal subunit protein bL20 (127 aa).

This sequence belongs to the bacterial ribosomal protein bL20 family.

Binds directly to 23S ribosomal RNA and is necessary for the in vitro assembly process of the 50S ribosomal subunit. It is not involved in the protein synthesizing functions of that subunit. This is Large ribosomal subunit protein bL20 from Akkermansia muciniphila (strain ATCC BAA-835 / DSM 22959 / JCM 33894 / BCRC 81048 / CCUG 64013 / CIP 107961 / Muc).